Reading from the N-terminus, the 207-residue chain is Large ribosomal subunit protein uL3c (207 aa).

The disordered stretch occupies residues 129-148; that stretch reads TRGPMTHGSKNHRAPGSIGM.

The protein belongs to the universal ribosomal protein uL3 family. As to quaternary structure, part of the 50S ribosomal subunit.

The protein localises to the plastid. The protein resides in the chloroplast. One of the primary rRNA binding proteins, it binds directly near the 3'-end of the 23S rRNA, where it nucleates assembly of the 50S subunit. This is Large ribosomal subunit protein uL3c (rpl3) from Phaeodactylum tricornutum (strain CCAP 1055/1).